A 415-amino-acid chain; its full sequence is Probable glucuronosyltransferase Os01g0926600 (415 aa).

Over 1-4 (MAMR) the chain is Cytoplasmic. The helical; Signal-anchor for type II membrane protein transmembrane segment at 5 to 25 (LSSAAVALALLLAATALEDVA) threads the bilayer. Topologically, residues 26-415 (RGQDTERIEG…QGPVGDLKPW (390 aa)) are lumenal. Asparagine 142 and asparagine 403 each carry an N-linked (GlcNAc...) asparagine glycan.

It belongs to the glycosyltransferase 47 family.

The protein localises to the golgi apparatus membrane. Its function is as follows. Involved in the synthesis of glucuronoxylan hemicellulose in secondary cell walls. This is Probable glucuronosyltransferase Os01g0926600 from Oryza sativa subsp. japonica (Rice).